The primary structure comprises 589 residues: Aspartate--tRNA ligase (589 aa).

Glu175 contributes to the L-aspartate binding site. Residues 199–202 (QIFK) are aspartate. Arg221 is a binding site for L-aspartate. ATP-binding positions include 221-223 (RDE) and Gln230. His449 lines the L-aspartate pocket. Glu483 contacts ATP. Arg490 provides a ligand contact to L-aspartate. 535–538 (GLDR) is an ATP binding site.

The protein belongs to the class-II aminoacyl-tRNA synthetase family. Type 1 subfamily. As to quaternary structure, homodimer.

It localises to the cytoplasm. The catalysed reaction is tRNA(Asp) + L-aspartate + ATP = L-aspartyl-tRNA(Asp) + AMP + diphosphate. In terms of biological role, catalyzes the attachment of L-aspartate to tRNA(Asp) in a two-step reaction: L-aspartate is first activated by ATP to form Asp-AMP and then transferred to the acceptor end of tRNA(Asp). In Shouchella clausii (strain KSM-K16) (Alkalihalobacillus clausii), this protein is Aspartate--tRNA ligase.